We begin with the raw amino-acid sequence, 800 residues long: MLISNEWLKEYVTIDDSVSNLAERITRTGIEVDDLIDYTKDIKNLVVGFVKSKEKHPDADKLNVCQVDIGEDEPVQIVCGAPNVDAGQYVIVAKVGGRLPGGIKIKRAKLRGERSEGMICSLQEIGISSNYIPKSFESGIYVFSEAQVPGTDALQALYLDDQVMEFDLTPNRADALSMIGTAYEVAALYNTKMTKPETTSNELDLSANDELTVTIENEDKVPYYSARVVHDVTIEPSPIWMQARLIKAGIRPINNVVDISNYVLLEYGQPLHMFDQDAIGSQQIVVRQANEGEKMTTLDDTERELLTSDIVITNGQTPIALAGVMGGDFSEVKEQTSNIVIEGAIFDPVSIRHTSRRLNLRSESSSRFEKGIATEFVDEAVDRACYLLQTYANGKVLKDRVSSGELGAFITPIDITADKINRTIGFDLSQNDIVTIFNQLGFDTEINDDVITVLVPSRRKDITIKEDLIEEVARIYGYDDIPSTLPVFDKVTSGQLTDRQYKTRMVKEVLEGAGLDQAITYSLVSKEDATAFSMQQRQTIDLLMPMSEAHASLRQSLLPHLIEAASYNVARKNKDVKLFEIGNVFFANGEGELPDQVEYLSGILTGDYVVNQWQDKKETVDFYLAKGVVDRVSEKLNLEFSYRRADIDGLHPGRTAEILLENKVVGFIGELHPILAADNDLKRTYVFELNFDALMAVSVGYINYQPIPRFPGMSRDIALEVDQNIPAADLLSTIHAHGGNILKDTLVFDVYQGEHLEKGKKSIAIRLNYLDTEETLTDERVSKVQAEIEAALIEQGAVIR.

Positions 39 to 154 (TKDIKNLVVG…EAQVPGTDAL (116 aa)) constitute a tRNA-binding domain. In terms of domain architecture, B5 spans 408 to 483 (AFITPIDITA…RIYGYDDIPS (76 aa)). Residues D461, D467, E470, and E471 each coordinate Mg(2+). The FDX-ACB domain maps to 708-800 (PRFPGMSRDI…ALIEQGAVIR (93 aa)).

Belongs to the phenylalanyl-tRNA synthetase beta subunit family. Type 1 subfamily. As to quaternary structure, tetramer of two alpha and two beta subunits. Mg(2+) serves as cofactor.

The protein localises to the cytoplasm. The catalysed reaction is tRNA(Phe) + L-phenylalanine + ATP = L-phenylalanyl-tRNA(Phe) + AMP + diphosphate + H(+). This is Phenylalanine--tRNA ligase beta subunit from Staphylococcus aureus (strain USA300).